Here is a 184-residue protein sequence, read N- to C-terminus: ATP synthase subunit b, chloroplastic (184 aa).

Residues 31–53 traverse the membrane as a helical segment; it reads LINLGIVISLLIYFGKGVLSNLL.

The protein belongs to the ATPase B chain family. As to quaternary structure, F-type ATPases have 2 components, F(1) - the catalytic core - and F(0) - the membrane proton channel. F(1) has five subunits: alpha(3), beta(3), gamma(1), delta(1), epsilon(1). F(0) has four main subunits: a(1), b(1), b'(1) and c(10-14). The alpha and beta chains form an alternating ring which encloses part of the gamma chain. F(1) is attached to F(0) by a central stalk formed by the gamma and epsilon chains, while a peripheral stalk is formed by the delta, b and b' chains.

Its subcellular location is the plastid. The protein resides in the chloroplast thylakoid membrane. Its function is as follows. F(1)F(0) ATP synthase produces ATP from ADP in the presence of a proton or sodium gradient. F-type ATPases consist of two structural domains, F(1) containing the extramembraneous catalytic core and F(0) containing the membrane proton channel, linked together by a central stalk and a peripheral stalk. During catalysis, ATP synthesis in the catalytic domain of F(1) is coupled via a rotary mechanism of the central stalk subunits to proton translocation. Component of the F(0) channel, it forms part of the peripheral stalk, linking F(1) to F(0). The protein is ATP synthase subunit b, chloroplastic of Aneura mirabilis (Parasitic liverwort).